The chain runs to 340 residues: Phosphoribosylformylglycinamidine cyclo-ligase (340 aa).

It belongs to the AIR synthase family.

The protein localises to the cytoplasm. The catalysed reaction is 2-formamido-N(1)-(5-O-phospho-beta-D-ribosyl)acetamidine + ATP = 5-amino-1-(5-phospho-beta-D-ribosyl)imidazole + ADP + phosphate + H(+). The protein operates within purine metabolism; IMP biosynthesis via de novo pathway; 5-amino-1-(5-phospho-D-ribosyl)imidazole from N(2)-formyl-N(1)-(5-phospho-D-ribosyl)glycinamide: step 2/2. The sequence is that of Phosphoribosylformylglycinamidine cyclo-ligase from Streptococcus gordonii (strain Challis / ATCC 35105 / BCRC 15272 / CH1 / DL1 / V288).